Consider the following 372-residue polypeptide: Aminomethyltransferase (372 aa).

This sequence belongs to the GcvT family. The glycine cleavage system is composed of four proteins: P, T, L and H.

It carries out the reaction N(6)-[(R)-S(8)-aminomethyldihydrolipoyl]-L-lysyl-[protein] + (6S)-5,6,7,8-tetrahydrofolate = N(6)-[(R)-dihydrolipoyl]-L-lysyl-[protein] + (6R)-5,10-methylene-5,6,7,8-tetrahydrofolate + NH4(+). The glycine cleavage system catalyzes the degradation of glycine. The polypeptide is Aminomethyltransferase (Synechocystis sp. (strain ATCC 27184 / PCC 6803 / Kazusa)).